The chain runs to 1056 residues: Isoleucine--tRNA ligase (1056 aa).

The span at 1-13 shows a compositional bias: polar residues; it reads MCDQGEVSSQNSS. Positions 1–26 are disordered; that stretch reads MCDQGEVSSQNSSDYKEQRPTPRPNL. The 'HIGH' region signature appears at 63–73; it reads PFANGLPHFGH. The 'KMSKS' region signature appears at 632-636; that stretch reads KASKS. Residue Lys635 coordinates ATP.

This sequence belongs to the class-I aminoacyl-tRNA synthetase family. IleS type 2 subfamily. In terms of assembly, monomer. The cofactor is Zn(2+).

It localises to the cytoplasm. It catalyses the reaction tRNA(Ile) + L-isoleucine + ATP = L-isoleucyl-tRNA(Ile) + AMP + diphosphate. In terms of biological role, catalyzes the attachment of isoleucine to tRNA(Ile). As IleRS can inadvertently accommodate and process structurally similar amino acids such as valine, to avoid such errors it has two additional distinct tRNA(Ile)-dependent editing activities. One activity is designated as 'pretransfer' editing and involves the hydrolysis of activated Val-AMP. The other activity is designated 'posttransfer' editing and involves deacylation of mischarged Val-tRNA(Ile). This chain is Isoleucine--tRNA ligase, found in Tropheryma whipplei (strain TW08/27) (Whipple's bacillus).